The primary structure comprises 406 residues: Ascaroside receptor GPR2 (406 aa).

The Extracellular portion of the chain corresponds to 1-29 (MTQLPYLLDRRGGALAAPATAWGDMMLNR). The helical transmembrane segment at 30 to 50 (ALFSVALLSSVGSAWVVLSYA) threads the bilayer. Topologically, residues 51 to 61 (CIKELRSYRHQ) are cytoplasmic. The helical transmembrane segment at 62–82 (LILGLAISDLLMSLNFMFSAG) threads the bilayer. Residues 83 to 107 (WNVAGGDLALEESRTACSVNGFLTQ) are Extracellular-facing. C99 and C173 form a disulfide bridge. Residues 108–128 (VFVVQTDWWILVIAIATYIIL) traverse the membrane as a helical segment. Topologically, residues 129–143 (GNFKTQSQFIQTHVW) are cytoplasmic. Residues 144-164 (IPWVGPWVLSIIIAAICHGVL) traverse the membrane as a helical segment. Residues 165–185 (GYGYIGGWCWLTSDLMRLLIN) are Extracellular-facing. A helical membrane pass occupies residues 186 to 206 (FIPRWLIVIAIALIYIRLYMI). Residues 207 to 326 (VRKARKWDIE…AAQLKRIAKK (120 aa)) are Cytoplasmic-facing. A helical transmembrane segment spans residues 327–347 (MMVYPVAYAIIWACPTAIRIY). At 348–356 (QGTTGSRAP) the chain is on the extracellular side. A helical transmembrane segment spans residues 357–377 (LWITIVDKSCIVIQGLVDAVV). Residues 378 to 406 (YGLNERAWQGWRDHIRRIIYKNEGGRIIG) lie on the Cytoplasmic side of the membrane.

This sequence belongs to the G-protein coupled receptor 1 family. As to quaternary structure, interacts with ascaroside receptor GPR3; may form a functional heterodimer. Interacts with guanine nucleotide-binding protein alpha GPA2; to activate adenylate cyclase and positively regulate nematode trap formation.

The protein resides in the cell membrane. G protein-coupled receptor that senses nematode ascaroside pheromones and signals via adenylate cyclase to positively regulate trap formation for nematode capture. This is Ascaroside receptor GPR2 from Arthrobotrys oligospora (strain ATCC 24927 / CBS 115.81 / DSM 1491) (Nematode-trapping fungus).